Reading from the N-terminus, the 259-residue chain is Phosphatidylglycerol--prolipoprotein diacylglyceryl transferase (259 aa).

The next 4 helical transmembrane spans lie at 16–36, 55–75, 92–112, and 117–137; these read LAISWYSLSYVIGILLGWFYA, FITYAVIGIIVGGRLGFVLLY, EGGMSFHGGALGGIIAAYLFC, and INFLSLTDIIAPVVPIGLFLG. An a 1,2-diacyl-sn-glycero-3-phospho-(1'-sn-glycerol)-binding site is contributed by Arg-138. Transmembrane regions (helical) follow at residues 172 to 192, 201 to 221, and 228 to 248; these read QLYEAFFEGLVLFSILAYATF, GLNSGIFFTFYGLFRITIEIF, and IGFILDSLTMGQILSVPMLLL.

Belongs to the Lgt family.

It localises to the cell inner membrane. It carries out the reaction L-cysteinyl-[prolipoprotein] + a 1,2-diacyl-sn-glycero-3-phospho-(1'-sn-glycerol) = an S-1,2-diacyl-sn-glyceryl-L-cysteinyl-[prolipoprotein] + sn-glycerol 1-phosphate + H(+). It functions in the pathway protein modification; lipoprotein biosynthesis (diacylglyceryl transfer). Its function is as follows. Catalyzes the transfer of the diacylglyceryl group from phosphatidylglycerol to the sulfhydryl group of the N-terminal cysteine of a prolipoprotein, the first step in the formation of mature lipoproteins. This chain is Phosphatidylglycerol--prolipoprotein diacylglyceryl transferase, found in Rickettsia rickettsii (strain Iowa).